The primary structure comprises 382 residues: Caspase-1-B (382 aa).

The propeptide occupies M1–E98. Catalysis depends on residues H216 and C270. Positions D283–D292 are excised as a propeptide.

This sequence belongs to the peptidase C14A family. In terms of assembly, heterotetramer that consists of two anti-parallel arranged heterodimers, each one formed by a 20 kDa (Caspase-1 subunit p20) and a 10 kDa (Caspase-1 subunit p10) subunit. As to quaternary structure, heterotetramer that consists of two anti-parallel arranged heterodimers, each one formed by a 20 kDa (Caspase-1 subunit p20) and a 10 kDa (Caspase-1 subunit p10) subunit. Can form a heterodimer with isoform epsilon which then has an inhibitory effect. The two subunits are derived from the precursor sequence by an autocatalytic mechanism.

It localises to the cytoplasm. Its subcellular location is the cell membrane. The enzyme catalyses Strict requirement for an Asp residue at position P1 and has a preferred cleavage sequence of Tyr-Val-Ala-Asp-|-.. In terms of biological role, thiol protease involved in a variety of inflammatory processes by proteolytically cleaving other proteins, such as the precursors of the inflammatory cytokines interleukin-1 beta (IL1B) and interleukin 18 (IL18) as well as the pyroptosis inducer Gasdermin-D (GSDMD), into active mature peptides. Plays a key role in cell immunity as an inflammatory response initiator: once activated through formation of an inflammasome complex, it initiates a pro-inflammatory response through the cleavage of the two inflammatory cytokines IL1B and IL18, releasing the mature cytokines which are involved in a variety of inflammatory processes. Cleaves a tetrapeptide after an Asp residue at position P1. Also initiates pyroptosis, a programmed lytic cell death pathway, through cleavage of GSDMD. The polypeptide is Caspase-1-B (casp1-b) (Xenopus laevis (African clawed frog)).